A 423-amino-acid polypeptide reads, in one-letter code: MEKTPAETTAVSAGNVPRDSIPCITNVSADTRGRTRPSRPATVPQRRPARIGHFRRRSASLSFLDWPDDSVTEGVRTTSASVAASAARFDEIRRRRQSINDEMKERTLEDALAVELVNETFRCSVTSDARKDLQKLVRRVSGTVLRLSWPNGWFFTYCDLLRVGYFGHLNIKGLEKTFLCCDKFLLPVGTVSRCEAIGRPPLPVLIGEGGRVYVYSPVVESLYLVSRSGFRGFVQEGLRNYAPLREELGYVRFETGGDVGREFMLARDLLALWRLCMKREGSIFSWRDGNEALTTVVLNGSQTYEDPAHGNWLKETCSLNVLQVFVVRAVPVESQQRLDISILVNESGAVFGVHPDTRQAHFLARGLLGFFRVGFLRFCNNYCFARDCFTHPESVAPAYRATGCPRELFCRRLRKKKGLFARR.

Polar residues predominate over residues 1-12 (MEKTPAETTAVS). The tract at residues 1–46 (MEKTPAETTAVSAGNVPRDSIPCITNVSADTRGRTRPSRPATVPQR) is disordered.

This sequence belongs to the herpesviridae US22 family.

The protein localises to the virion tegument. This is Tegument protein UL43 (UL43) from Homo sapiens (Human).